A 238-amino-acid polypeptide reads, in one-letter code: Ribonuclease 3 (238 aa).

Residues 8 to 135 (VAELERRIGY…LIAALYIDGG (128 aa)) enclose the RNase III domain. Mg(2+) is bound at residue Glu-48. Residue Asp-52 is part of the active site. 2 residues coordinate Mg(2+): Asp-121 and Glu-124. Residue Glu-124 is part of the active site. Residues 161–230 (DPKTQLQEWV…AQCMLLKREG (70 aa)) enclose the DRBM domain.

It belongs to the ribonuclease III family. Homodimer. The cofactor is Mg(2+).

It is found in the cytoplasm. It carries out the reaction Endonucleolytic cleavage to 5'-phosphomonoester.. Digests double-stranded RNA. Involved in the processing of primary rRNA transcript to yield the immediate precursors to the large and small rRNAs (23S and 16S). Processes some mRNAs, and tRNAs when they are encoded in the rRNA operon. Processes pre-crRNA and tracrRNA of type II CRISPR loci if present in the organism. The polypeptide is Ribonuclease 3 (Phenylobacterium zucineum (strain HLK1)).